The sequence spans 757 residues: Relaxin receptor 1 (757 aa).

Topologically, residues 1 to 409 are extracellular; it reads MTSGSVFFYI…ENLLASIIQR (409 aa). In terms of domain architecture, LDL-receptor class A spans 26 to 63; that stretch reads KCSLGYFPCGNITKCLPQLLHCNGVDDCGNQADEDNCG. Intrachain disulfides connect Cys-27-Cys-40, Cys-34-Cys-53, and Cys-47-Cys-62. Asn-36 carries N-linked (GlcNAc...) asparagine glycosylation. Ca(2+)-binding residues include Leu-45, Asn-48, Val-50, Asp-52, Asp-58, and Glu-59. Positions 91–127 constitute an LRRNT domain; that stretch reads ETPECLVGSVPVQCLCQGLELDCDETNLRAVPSVSSN. N-linked (GlcNAc...) asparagine glycosylation is present at Asn-127. LRR repeat units lie at residues 151-172, 175-196, 199-220, 223-244, 248-269, 272-293, 296-317, 320-341, and 344-365; these read DLQKLYLQNNKITSISIYAFRG, SLTKLYLSHNRITFLKPGVFED, RLEWLIIEDNHLSRISPPTFYG, SLILLVLMNNVLTRLPDKPLCQ, RLHWLDLEGNHIHNLRNLTFIS, NLTVLVMRKNKINHLNENTFAP, KLDELDLGSNKIENLPPLIFKD, ELSQLNLSYNPIQKIQANQFDY, and KLKSLSLEGIEISNIQQRMFRP. N-linked (GlcNAc...) asparagine glycosylation is found at Asn-264 and Asn-272. Asn-325 is a glycosylation site (N-linked (GlcNAc...) asparagine). An N-linked (GlcNAc...) asparagine glycan is attached at Asn-368. The helical transmembrane segment at 410-430 threads the bilayer; sequence VFVWVVSAVTCFGNIFVICMR. The Cytoplasmic segment spans residues 431–443; the sequence is PYIRSENKLYAMS. The helical transmembrane segment at 444–464 threads the bilayer; that stretch reads IISLCCADCLMGIYLFVIGGF. Over 465 to 486 the chain is Extracellular; that stretch reads DLKFRGEYNKHAQLWMESTHCQ. Cys-485 and Cys-563 are oxidised to a cystine. The chain crosses the membrane as a helical span at residues 487 to 507; sequence LVGSLAILSTEVSVLLLTFLT. Over 508–527 the chain is Cytoplasmic; sequence LEKYICIVYPFRCVRPGKCR. Residues 528–548 form a helical membrane-spanning segment; it reads TITVLILIWITGFIVAFIPLS. The Extracellular portion of the chain corresponds to 549 to 577; that stretch reads NKEFFKNYYGTNGVCFPLHSEDTESIGAQ. A helical transmembrane segment spans residues 578-598; that stretch reads IYSVAIFLGINLAAFIIIVFS. Topologically, residues 599-629 are cytoplasmic; that stretch reads YGSMFYSVHQSAITATEIRNQVKKEMILAKR. Residues 630–650 form a helical membrane-spanning segment; that stretch reads FFFIVFTDALCWIPIFVVKFL. A topological domain (extracellular) is located at residue Ser-651. Residues 652 to 672 traverse the membrane as a helical segment; sequence LLQVEIPGTITSWVVIFILPI. Over 673–757 the chain is Cytoplasmic; the sequence is NSALNPILYT…SQSTRLNSYS (85 aa).

It belongs to the G-protein coupled receptor 1 family. As to quaternary structure, interacts with C1QTNF8. As to expression, expressed in the brain, kidney, testis, placenta, uterus, ovary, adrenal, prostate, skin and heart. Not detected in spleen.

The protein localises to the cell membrane. Its function is as follows. Receptor for relaxins. The activity of this receptor is mediated by G proteins leading to stimulation of adenylate cyclase and an increase of cAMP. Binding of the ligand may also activate a tyrosine kinase pathway that inhibits the activity of a phosphodiesterase that degrades cAMP. In Homo sapiens (Human), this protein is Relaxin receptor 1 (RXFP1).